The primary structure comprises 437 residues: Matrix remodeling-associated protein 8 (437 aa).

The signal sequence occupies residues 1–22 (MEQLAKLLLWQLLLQQSSVVYL). The Extracellular portion of the chain corresponds to 23–339 (YSVPADASNP…PESRIHFFQQ (317 aa)). Ig-like V-type domains follow at residues 32-159 (PDSV…LDIT) and 167-294 (EYWD…VFVT). Asparagine 41, asparagine 121, asparagine 246, and asparagine 304 each carry an N-linked (GlcNAc...) asparagine glycan. 2 cysteine pairs are disulfide-bonded: cysteine 54/cysteine 139 and cysteine 188/cysteine 274. Residues 340-360 (LGYVLATLLLFVVLLIIVVFI) traverse the membrane as a helical segment. The Cytoplasmic segment spans residues 361–437 (TRKRRQRGYE…DKDFRKEYCK (77 aa)).

In terms of assembly, homodimer in cis. Does not appear to form trans-homodimers.

The protein resides in the cell membrane. Its function is as follows. Transmembrane protein which can modulate activity of various signaling pathways, probably via binding to integrin ITGAV:ITGB3. Mediates heterophilic cell-cell interactions in vitro. In Gallus gallus (Chicken), this protein is Matrix remodeling-associated protein 8 (MXRA8).